The sequence spans 248 residues: NAD(P)H-quinone oxidoreductase subunit K 1 (248 aa).

The propeptide occupies 1 to 2; it reads MS. Residues cysteine 62, cysteine 63, cysteine 127, and cysteine 158 each coordinate [4Fe-4S] cluster. Residues 228-248 are disordered; sequence MGMPVPPALTTSQQKEQLNRG. The segment covering 236–248 has biased composition (polar residues); the sequence is LTTSQQKEQLNRG.

It belongs to the complex I 20 kDa subunit family. In terms of assembly, NDH-1 can be composed of about 15 different subunits; different subcomplexes with different compositions have been identified which probably have different functions. [4Fe-4S] cluster is required as a cofactor.

It is found in the cellular thylakoid membrane. It carries out the reaction a plastoquinone + NADH + (n+1) H(+)(in) = a plastoquinol + NAD(+) + n H(+)(out). It catalyses the reaction a plastoquinone + NADPH + (n+1) H(+)(in) = a plastoquinol + NADP(+) + n H(+)(out). Functionally, NDH-1 shuttles electrons from an unknown electron donor, via FMN and iron-sulfur (Fe-S) centers, to quinones in the respiratory and/or the photosynthetic chain. The immediate electron acceptor for the enzyme in this species is believed to be plastoquinone. Couples the redox reaction to proton translocation, and thus conserves the redox energy in a proton gradient. Cyanobacterial NDH-1 also plays a role in inorganic carbon-concentration. This chain is NAD(P)H-quinone oxidoreductase subunit K 1, found in Synechocystis sp. (strain ATCC 27184 / PCC 6803 / Kazusa).